We begin with the raw amino-acid sequence, 233 residues long: Phosphoribosylaminoimidazole-succinocarboxamide synthase (233 aa).

Belongs to the SAICAR synthetase family.

It carries out the reaction 5-amino-1-(5-phospho-D-ribosyl)imidazole-4-carboxylate + L-aspartate + ATP = (2S)-2-[5-amino-1-(5-phospho-beta-D-ribosyl)imidazole-4-carboxamido]succinate + ADP + phosphate + 2 H(+). Its pathway is purine metabolism; IMP biosynthesis via de novo pathway; 5-amino-1-(5-phospho-D-ribosyl)imidazole-4-carboxamide from 5-amino-1-(5-phospho-D-ribosyl)imidazole-4-carboxylate: step 1/2. In Staphylococcus saprophyticus subsp. saprophyticus (strain ATCC 15305 / DSM 20229 / NCIMB 8711 / NCTC 7292 / S-41), this protein is Phosphoribosylaminoimidazole-succinocarboxamide synthase.